Reading from the N-terminus, the 260-residue chain is Coiled-coil domain-containing protein 127 (260 aa).

A coiled-coil region spans residues 49–135 (QKEVEKEREA…QVMQEKRQVQ (87 aa)).

In Homo sapiens (Human), this protein is Coiled-coil domain-containing protein 127 (CCDC127).